We begin with the raw amino-acid sequence, 418 residues long: NADH-quinone oxidoreductase subunit H (418 aa).

9 helical membrane-spanning segments follow: residues 15 to 35, 83 to 103, 123 to 143, 164 to 184, 197 to 217, 262 to 282, 287 to 307, 321 to 341, and 349 to 369; these read LVLGKALAIFVFLMLNVLVAI, FVYFAAPVISTIPAFTAFAFI, LPVAVLFILGLSAIGVYGIVL, VISYEVAMGLSFAAVFLYAGS, VWFVFLLLPSFVIYLISMVGE, LATALFFGGWHAPWPLNMWAG, WWPVLWFTAKMWTFLFIYFWL, GLGWKLLIPASLVWVLIAAVI, and YAHWTPILVISSIVFAAALVL. Positions 394–418 are disordered; it reads AAHRAGFHPGIPDTAAAGESAGGRE.

It belongs to the complex I subunit 1 family. In terms of assembly, NDH-1 is composed of 14 different subunits. Subunits NuoA, H, J, K, L, M, N constitute the membrane sector of the complex.

Its subcellular location is the cell membrane. It catalyses the reaction a quinone + NADH + 5 H(+)(in) = a quinol + NAD(+) + 4 H(+)(out). Its function is as follows. NDH-1 shuttles electrons from NADH, via FMN and iron-sulfur (Fe-S) centers, to quinones in the respiratory chain. The immediate electron acceptor for the enzyme in this species is believed to be menaquinone. Couples the redox reaction to proton translocation (for every two electrons transferred, four hydrogen ions are translocated across the cytoplasmic membrane), and thus conserves the redox energy in a proton gradient. This subunit may bind ubiquinone. The polypeptide is NADH-quinone oxidoreductase subunit H (Mycobacterium avium (strain 104)).